The sequence spans 402 residues: NADH-quinone oxidoreductase subunit D (402 aa).

Belongs to the complex I 49 kDa subunit family. As to quaternary structure, NDH-1 is composed of 14 different subunits. Subunits NuoB, C, D, E, F, and G constitute the peripheral sector of the complex.

Its subcellular location is the cell inner membrane. The enzyme catalyses a quinone + NADH + 5 H(+)(in) = a quinol + NAD(+) + 4 H(+)(out). NDH-1 shuttles electrons from NADH, via FMN and iron-sulfur (Fe-S) centers, to quinones in the respiratory chain. The immediate electron acceptor for the enzyme in this species is believed to be ubiquinone. Couples the redox reaction to proton translocation (for every two electrons transferred, four hydrogen ions are translocated across the cytoplasmic membrane), and thus conserves the redox energy in a proton gradient. In Cereibacter sphaeroides (strain ATCC 17025 / ATH 2.4.3) (Rhodobacter sphaeroides), this protein is NADH-quinone oxidoreductase subunit D.